The following is a 343-amino-acid chain: UPF0157 protein YqkA (343 aa).

Residues 8-144 (KEATIAREIL…VKAAQGLLLS (137 aa)) form the N-acetyltransferase domain. Residues 135–343 (VKAAQGLLLS…ENDENGGFTL (209 aa)) form a UPF0157 region.

The protein in the C-terminal section; belongs to the UPF0157 (GrpB) family.

The protein is UPF0157 protein YqkA (yqkA) of Bacillus subtilis (strain 168).